Reading from the N-terminus, the 446-residue chain is Probable tRNA modification GTPase MnmE (446 aa).

Positions 28, 87, and 126 each coordinate (6S)-5-formyl-5,6,7,8-tetrahydrofolate. The TrmE-type G domain maps to 218–373; that stretch reads GIQVALLGPA…LKQLIWQQAT (156 aa). N228 provides a ligand contact to K(+). GTP contacts are provided by residues 228–233, 247–253, and 272–275; these read NAGKST, TPIAGTT, and DTAG. S232 is a binding site for Mg(2+). Residues T247, I249, and T252 each contribute to the K(+) site. T253 provides a ligand contact to Mg(2+). A (6S)-5-formyl-5,6,7,8-tetrahydrofolate-binding site is contributed by K446.

The protein belongs to the TRAFAC class TrmE-Era-EngA-EngB-Septin-like GTPase superfamily. TrmE GTPase family. K(+) serves as cofactor.

It is found in the plastid. It localises to the chloroplast. Its function is as follows. Exhibits a very high intrinsic GTPase hydrolysis rate. Involved in the addition of a carboxymethylaminomethyl (cmnm) group at the wobble position (U34) of certain tRNAs, forming tRNA-cmnm(5)s(2)U34. This Cyanidioschyzon merolae (strain NIES-3377 / 10D) (Unicellular red alga) protein is Probable tRNA modification GTPase MnmE.